Here is a 210-residue protein sequence, read N- to C-terminus: Holliday junction branch migration complex subunit RuvA (210 aa).

The segment at 1–64 (MIGLIEGRVC…EDAQLLYGFL (64 aa)) is domain I. The tract at residues 65–143 (HPTERDVFRQ…HIQSDMSLLT (79 aa)) is domain II. The segment at 144–154 (EVEQQIGIAAN) is flexible linker. The segment at 155 to 210 (SEGVILAEVESALISLGYRDKEAQQAIKAARETDAGQQLVDTQSLLKLTLKQLSNF) is domain III.

This sequence belongs to the RuvA family. As to quaternary structure, homotetramer. Forms an RuvA(8)-RuvB(12)-Holliday junction (HJ) complex. HJ DNA is sandwiched between 2 RuvA tetramers; dsDNA enters through RuvA and exits via RuvB. An RuvB hexamer assembles on each DNA strand where it exits the tetramer. Each RuvB hexamer is contacted by two RuvA subunits (via domain III) on 2 adjacent RuvB subunits; this complex drives branch migration. In the full resolvosome a probable DNA-RuvA(4)-RuvB(12)-RuvC(2) complex forms which resolves the HJ.

Its subcellular location is the cytoplasm. In terms of biological role, the RuvA-RuvB-RuvC complex processes Holliday junction (HJ) DNA during genetic recombination and DNA repair, while the RuvA-RuvB complex plays an important role in the rescue of blocked DNA replication forks via replication fork reversal (RFR). RuvA specifically binds to HJ cruciform DNA, conferring on it an open structure. The RuvB hexamer acts as an ATP-dependent pump, pulling dsDNA into and through the RuvAB complex. HJ branch migration allows RuvC to scan DNA until it finds its consensus sequence, where it cleaves and resolves the cruciform DNA. The protein is Holliday junction branch migration complex subunit RuvA of Psychrobacter sp. (strain PRwf-1).